Reading from the N-terminus, the 581-residue chain is MKSHTQSLLAESLNALKQQGVVPADFEARIQVDRTKDKSHGDFATNLAMMLTKAARKNPREIAQLIIDNLPQSSHVEKVEIAGPGFINFFIDDNALANQLMDALNSDHLGVTLPESQTVVVDYSSPNLAKEMHVGHLRSTIIGDSVVRSLEFMGHNVIRQNHVGDWGTQFGMLLAYMEELRAANGEQAQIELSDLENFYRAAKVRFDESEDFANRARKLVVALQSGDEYCNKLWREFNDISLSHCHEIYERLGVSLTRQDVRGESSYNDDLEQVVADLDSQGLLSESNGAKVVFQEEFKNKEGEPLPVIIQKADGGYLYATSDMAAMRYRSNVLKADRALYFVDLRQALHFQQVFKLAKTAKFVREEMSFEHMGFGTMNGEDGRPFKTRSGGVVKLIDLLKEADTRALELVRSKNPDMDEAELAEIARVVGIASVKYADLSKNRTSDYIFSFEQMLSFEGNTAPYLLYAYTRVAGIFKRAQDVDLSDAKIVLEHEKEKDLGTKLAQFGEVMNRVVNKGQPHALCAYLFELAGAFSSFYEACPVLAADTEAQKKSRLLLAQLTAKTLKQGLNLLGLETLERM.

Residues 126–136 carry the 'HIGH' region motif; the sequence is PNLAKEMHVGH.

It belongs to the class-I aminoacyl-tRNA synthetase family. In terms of assembly, monomer.

It localises to the cytoplasm. The catalysed reaction is tRNA(Arg) + L-arginine + ATP = L-arginyl-tRNA(Arg) + AMP + diphosphate. The protein is Arginine--tRNA ligase of Shewanella piezotolerans (strain WP3 / JCM 13877).